A 203-amino-acid polypeptide reads, in one-letter code: Holliday junction branch migration complex subunit RuvA (203 aa).

The interval M1 to N64 is domain I. The tract at residues N65 to P142 is domain II. The tract at residues A143–P154 is flexible linker. A domain III region spans residues A155 to L203.

The protein belongs to the RuvA family. In terms of assembly, homotetramer. Forms an RuvA(8)-RuvB(12)-Holliday junction (HJ) complex. HJ DNA is sandwiched between 2 RuvA tetramers; dsDNA enters through RuvA and exits via RuvB. An RuvB hexamer assembles on each DNA strand where it exits the tetramer. Each RuvB hexamer is contacted by two RuvA subunits (via domain III) on 2 adjacent RuvB subunits; this complex drives branch migration. In the full resolvosome a probable DNA-RuvA(4)-RuvB(12)-RuvC(2) complex forms which resolves the HJ.

Its subcellular location is the cytoplasm. Functionally, the RuvA-RuvB-RuvC complex processes Holliday junction (HJ) DNA during genetic recombination and DNA repair, while the RuvA-RuvB complex plays an important role in the rescue of blocked DNA replication forks via replication fork reversal (RFR). RuvA specifically binds to HJ cruciform DNA, conferring on it an open structure. The RuvB hexamer acts as an ATP-dependent pump, pulling dsDNA into and through the RuvAB complex. HJ branch migration allows RuvC to scan DNA until it finds its consensus sequence, where it cleaves and resolves the cruciform DNA. In Shigella boydii serotype 18 (strain CDC 3083-94 / BS512), this protein is Holliday junction branch migration complex subunit RuvA.